A 493-amino-acid chain; its full sequence is Putative lon protease homolog (493 aa).

52-59 contacts ATP; the sequence is GPPGVGKS.

This sequence belongs to the peptidase S16 family.

This Thermoplasma acidophilum (strain ATCC 25905 / DSM 1728 / JCM 9062 / NBRC 15155 / AMRC-C165) protein is Putative lon protease homolog.